A 124-amino-acid polypeptide reads, in one-letter code: TP53-target gene 3 protein (124 aa).

The segment covering 1–11 (MRASPCISQPA) has biased composition (polar residues). A disordered region spans residues 1-42 (MRASPCISQPAASWHPRPSALRPTAGSGPDTRTPGTVEDGSA).

In terms of tissue distribution, strongly expressed in testis. Weakly expressed in heart, placenta and skeletal muscle.

The protein resides in the cytoplasm. It localises to the nucleus. Its function is as follows. May play a significant role in p53/TP53-mediating signaling pathway. The sequence is that of TP53-target gene 3 protein from Homo sapiens (Human).